The sequence spans 479 residues: Transmembrane protein 161A (479 aa).

A signal peptide spans 1–28 (MAVLGVQLVVTLLTATLMHRLAPHCSFA). The Extracellular segment spans residues 29 to 98 (RWLLCNGSLF…LTTVDALVLR (70 aa)). A glycan (N-linked (GlcNAc...) asparagine) is linked at Asn-34. Ser-69 is subject to Phosphoserine. The chain crosses the membrane as a helical span at residues 99-119 (FFLEYQWFVDFAVYSGGVYLF). Over 120–134 (TEAYYYMLGPAKETN) the chain is Cytoplasmic. Residues 135 to 155 (IAVFWCLLTVTFSIKMFLTVT) form a helical membrane-spanning segment. The Extracellular portion of the chain corresponds to 156–166 (RLYFSAEEGGE). A helical transmembrane segment spans residues 167 to 187 (RSVCLTFAFLFLLLAMLVQVV). Over 188–224 (REETLELGLEPGLASMTQNLEPLLKKQGWDWALPVAK) the chain is Cytoplasmic. A helical membrane pass occupies residues 225 to 245 (LAIRVGLAVVGSVLGAFLTFP). Residues 246 to 263 (GLRLAQTHRDALTMSEDR) lie on the Extracellular side of the membrane. A helical transmembrane segment spans residues 264–284 (PMLQFLLHTSFLSPLFILWLW). The Cytoplasmic segment spans residues 285–304 (TKPIARDFLHQPPFGETRFS). A helical transmembrane segment spans residues 305–325 (LLSDSAFDSGRLWLLVVLCLL). The Extracellular segment spans residues 326-370 (RLAVTRPHLQAYLCLAKARVEQLRREAGRIEAREIQQRVVRVYCY). Residues 371–391 (VTVVSLQYLTPLILTLNCTLL) traverse the membrane as a helical segment. Over 392-449 (LKTLGGYSWGLGPAPLLSPDPSSASAAPIGSGEDEVQQTAARIAGALGGLLTPLFLRG) the chain is Cytoplasmic. Residues 450–470 (VLAYLIWWTAACQLLASLFGL) traverse the membrane as a helical segment. At 471–479 (YFHQHLAGS) the chain is on the extracellular side.

It belongs to the TMEM161 family.

Its subcellular location is the membrane. Its function is as follows. May play a role in protection against oxidative stress. Overexpression leads to reduced levels of oxidant-induced DNA damage and apoptosis. The polypeptide is Transmembrane protein 161A (TMEM161A) (Homo sapiens (Human)).